The sequence spans 356 residues: tRNA N6-adenosine threonylcarbamoyltransferase (356 aa).

2 residues coordinate Fe cation: His-115 and His-119. Substrate contacts are provided by residues 138–142 (LVSGG), Asp-171, Gly-184, and Asn-283. Residue Asp-311 participates in Fe cation binding.

The protein belongs to the KAE1 / TsaD family. The cofactor is Fe(2+).

Its subcellular location is the cytoplasm. It carries out the reaction L-threonylcarbamoyladenylate + adenosine(37) in tRNA = N(6)-L-threonylcarbamoyladenosine(37) in tRNA + AMP + H(+). Required for the formation of a threonylcarbamoyl group on adenosine at position 37 (t(6)A37) in tRNAs that read codons beginning with adenine. Is involved in the transfer of the threonylcarbamoyl moiety of threonylcarbamoyl-AMP (TC-AMP) to the N6 group of A37, together with TsaE and TsaB. TsaD likely plays a direct catalytic role in this reaction. This Prochlorococcus marinus (strain MIT 9301) protein is tRNA N6-adenosine threonylcarbamoyltransferase.